Here is a 96-residue protein sequence, read N- to C-terminus: Copper-sensing transcriptional repressor RicR (96 aa).

N-acetylthreonine is present on Thr2. Residues Cys38, His63, and Cys67 each coordinate Cu cation.

Belongs to the CsoR family.

Its subcellular location is the cytoplasm. Its function is as follows. Under low copper conditions, represses the expression of lpqS, Rv2963, mymT, socA, socB, mmcO and its own expression. In the presence of copper, RicR dissociates from DNA, leading to the expression of the target genes. Members of the RicR regulon are important for copper resistance during infections and full virulence in a mouse model of infection. This is Copper-sensing transcriptional repressor RicR from Mycobacterium tuberculosis (strain ATCC 25618 / H37Rv).